A 190-amino-acid chain; its full sequence is Negative regulator YfiR (190 aa).

Arginine 60 is a GMP binding site. 2 cysteine pairs are disulfide-bonded: cysteine 71–cysteine 110 and cysteine 145–cysteine 152. Residues arginine 175 and histidine 177 each coordinate GMP.

In terms of assembly, homodimer. Interacts with TpbB/YfiN. Interacts with YfiB. The YfiB-YfiR complex is a 2:2 heterotetramer. Post-translationally, cys-71 and Cys-110 form a disulfide bond in the oxidized form but maintain their free form in the non-oxidized YfiR structure. The Cys-145-Cys-152 disulfide bond is well formed in both structures. The Cys145-Cys152 disulfide bond, but not Cys-71-Cys-110, plays an important role in maintaining the correct folding of the protein.

It is found in the periplasm. Its activity is regulated as follows. TpbB/YfiN repression is released through an YfiB-dependent sequestration of YfiR to the outer membrane. Binds vitamin B6 (VB6) or L-Trp at the periphery of the dimer, and both VB6 and L-Trp are able to reduce biofilm formation induced by YfiB L43P mutant. However, VB6 or L-Trp alone may have little effects in interrupting the YfiB-YfiR interaction. GMP enhances the binding affinity between YfiB and YfiR. In terms of biological role, negatively regulates the activity of the diguanylate cyclase TpbB/YfiN, leading to decreased c-di-GMP production. Inhibits TpbB/YfiN allosterically, through a hydrophobic interaction between the C-terminus of YfiR and a conserved region of the periplasmic PAS domain of TpbB/YfiN. Under reducing conditions, may also act as an YfiB-independent sensing device that is able to activate TpbB/YfiN in response to the redox status of the periplasm. Part of the YfiB-TpbB-YfiR (or yfiBNR) system, encoding a tripartite signaling module that modulates intracellular c-di-GMP levels. The system is a key regulator of the small colony variant (SCV) phenotype, and plays an important role in biofilm formation and in vivo persistence. The c-di-GMP produced by TpbB/YfiN stimulates the production of the Pel and Psl exopolysaccharides, which promotes surface attachment, generates an SCV phenotype and confers resistance against phagocytosis. This is Negative regulator YfiR from Pseudomonas aeruginosa (strain ATCC 15692 / DSM 22644 / CIP 104116 / JCM 14847 / LMG 12228 / 1C / PRS 101 / PAO1).